The primary structure comprises 705 residues: Bifunctional arginine dihydrolase/ornithine cyclodeaminase ArgZ (705 aa).

Positions 10-269 (CPPDHYDVDY…GAAKCLTLRV (260 aa)) are arginine dihydrolase. Residues Asn22, Asn71, Arg90, Arg139, His168, Asp170, Ala258, and Cys264 each contribute to the L-arginine site. L-ornithine-binding residues include Asn22, Asn71, Arg90, Arg139, and His168. His168 serves as the catalytic Proton donor/acceptor. Residues Ala258 and Cys264 each contribute to the L-ornithine site. The active-site Nucleophile is Cys264. The ornithine cyclodeaminase stretch occupies residues 285 to 695 (SRVIRMEGHL…SLLVRQLQQL (411 aa)). NAD(+)-binding residues include Asn525, Ala526, Asp604, Ser636, Met637, Leu638, His639, Asp657, Asp680, and Val681.

This sequence in the N-terminal section; belongs to the DDAH family. The protein in the C-terminal section; belongs to the AgrE/ArgZ ornithine cyclodeaminase family. As to quaternary structure, homotetramer. Requires NAD(+) as cofactor.

The catalysed reaction is L-arginine + 2 H2O + 2 H(+) = L-ornithine + 2 NH4(+) + CO2. The enzyme catalyses L-ornithine = L-proline + NH4(+). With respect to regulation, arginine dihydrolase activity does not require a metal cofactor. Functionally, bifunctional enzyme involved in a cyanobacterial arginine utilization pathway that enables cellular adaptation to nitrogen fluctuations. Catalyzes the hydrolysis of arginine to ornithine, with the release of ammonia and carbon dioxide. Then, probably catalyzes the conversion of ornithine to proline, with the release of ammonia. Is highly specific for arginine and cannot hydrolyze citrulline, dimethylarginine and other amino acids. This chain is Bifunctional arginine dihydrolase/ornithine cyclodeaminase ArgZ, found in Synechocystis sp. (strain ATCC 27184 / PCC 6803 / Kazusa).